Consider the following 408-residue polypeptide: Tyrosine--tRNA ligase (408 aa).

A 'HIGH' region motif is present at residues 50–59 (PTGKDLTLGH). Residues 234–238 (KMSKS) carry the 'KMSKS' region motif. Residue lysine 237 participates in ATP binding. One can recognise an S4 RNA-binding domain in the interval 346 to 407 (MQAARVLFTA…GKRKYGRVVL (62 aa)).

Belongs to the class-I aminoacyl-tRNA synthetase family. TyrS type 2 subfamily. As to quaternary structure, homodimer.

It localises to the cytoplasm. The catalysed reaction is tRNA(Tyr) + L-tyrosine + ATP = L-tyrosyl-tRNA(Tyr) + AMP + diphosphate + H(+). Functionally, catalyzes the attachment of tyrosine to tRNA(Tyr) in a two-step reaction: tyrosine is first activated by ATP to form Tyr-AMP and then transferred to the acceptor end of tRNA(Tyr). The chain is Tyrosine--tRNA ligase from Symbiobacterium thermophilum (strain DSM 24528 / JCM 14929 / IAM 14863 / T).